We begin with the raw amino-acid sequence, 142 residues long: Small ribosomal subunit protein uS12 (142 aa).

The protein belongs to the universal ribosomal protein uS12 family. In terms of assembly, part of the 30S ribosomal subunit.

Its function is as follows. With S4 and S5 plays an important role in translational accuracy. Located at the interface of the 30S and 50S subunits. This is Small ribosomal subunit protein uS12 from Methanothrix thermoacetophila (strain DSM 6194 / JCM 14653 / NBRC 101360 / PT) (Methanosaeta thermophila).